The chain runs to 390 residues: Heat stress transcription factor B-2b (390 aa).

The tract at residues 165 to 212 is disordered; the sequence is TRDGSPVLSGEEQVISSSSSPEPPLVLPQAPSGSGSGGVASGDVGDEN. Residues 206–237 are a coiled coil; sequence GDVGDENERLRRENAQLARELSQMRKLCNNIL. The segment at 215–244 is hydrophobic repeat HR-A/B; that stretch reads LRRENAQLARELSQMRKLCNNILLLMSKYA. The short motif at 318-322 is the Nuclear localization signal element; it reads RKRMR. Positions 322–363 are disordered; the sequence is RHDGGGDDDHAATVKAEPMDGRPHGKDEQSAETQAWPIYRPR. The segment covering 323 to 350 has biased composition (basic and acidic residues); that stretch reads HDGGGDDDHAATVKAEPMDGRPHGKDEQ.

This sequence belongs to the HSF family. Class B subfamily. Homotrimer. Post-translationally, exhibits temperature-dependent phosphorylation.

Its subcellular location is the nucleus. Its function is as follows. Transcriptional regulator that specifically binds DNA of heat shock promoter elements (HSE). The chain is Heat stress transcription factor B-2b (HSFB2B) from Oryza sativa subsp. japonica (Rice).